We begin with the raw amino-acid sequence, 359 residues long: Peptide chain release factor 1 (359 aa).

An N5-methylglutamine modification is found at Gln235.

Belongs to the prokaryotic/mitochondrial release factor family. Methylated by PrmC. Methylation increases the termination efficiency of RF1.

The protein resides in the cytoplasm. Functionally, peptide chain release factor 1 directs the termination of translation in response to the peptide chain termination codons UAG and UAA. This Methylibium petroleiphilum (strain ATCC BAA-1232 / LMG 22953 / PM1) protein is Peptide chain release factor 1.